The sequence spans 66 residues: Gas vesicle protein A (66 aa).

Belongs to the gas vesicle GvpA family. The gas vesicle shell is 2 nm thick and consists of a single layer of this protein. It forms helical ribs nearly perpendicular to the long axis of the vesicle.

The protein resides in the gas vesicle shell. Gas vesicles are hollow, gas filled proteinaceous nanostructures found in some microorganisms. During planktonic growth they allow positioning of the organism at a favorable depth for light or nutrient acquisition. GvpA forms the protein shell. This is Gas vesicle protein A from Thiocapsa pendens (Amoebobacter pendens).